The chain runs to 486 residues: Matrilin-3 (486 aa).

A signal peptide spans 1-28 (MPRPAPARRLPGLLLLLWPLLLLPSAAP). A disordered region spans residues 32–75 (ARPGFRRLETRGPGGSPGRRPSPAAPDGAPASGTSEPGRARGAG). Positions 49-64 (GRRPSPAAPDGAPASG) are enriched in low complexity. In terms of domain architecture, VWFA spans 83–258 (DLVFIIDSSR…GVIEKLSSRF (176 aa)). Omega-N-methylarginine is present on arginine 198. 4 consecutive EGF-like domains span residues 264–305 (ALDP…KTCS), 306–347 (ALDR…KTCS), 348–389 (AQDK…KTCS), and 390–431 (VRDK…KTCS). 12 cysteine pairs are disulfide-bonded: cysteine 268/cysteine 279, cysteine 275/cysteine 289, cysteine 291/cysteine 304, cysteine 310/cysteine 321, cysteine 317/cysteine 331, cysteine 333/cysteine 346, cysteine 352/cysteine 363, cysteine 359/cysteine 373, cysteine 375/cysteine 388, cysteine 394/cysteine 405, cysteine 401/cysteine 415, and cysteine 417/cysteine 430. The residue at position 441 (serine 441) is a Phosphoserine; by FAM20C. The residue at position 442 (threonine 442) is a Phosphothreonine; by FAM20C. A coiled-coil region spans residues 456 to 480 (DKVSSYLQRLNTKLDDILEKLKINE).

In terms of assembly, can form homooligomers (monomers, dimers, trimers and tetramers) and heterooligomers with matrilin-1. Interacts with COMP. Component of a complex containing at least CRELD2, MANF, MATN3 and PDIA4. In terms of tissue distribution, expressed only in cartilaginous tissues, such as vertebrae, ribs and shoulders.

Its subcellular location is the secreted. Functionally, major component of the extracellular matrix of cartilage and may play a role in the formation of extracellular filamentous networks. The chain is Matrilin-3 (MATN3) from Homo sapiens (Human).